Here is a 184-residue protein sequence, read N- to C-terminus: Nucleoside triphosphate pyrophosphatase (184 aa).

The active-site Proton acceptor is the D71.

This sequence belongs to the Maf family. The cofactor is a divalent metal cation.

It is found in the cytoplasm. The catalysed reaction is a ribonucleoside 5'-triphosphate + H2O = a ribonucleoside 5'-phosphate + diphosphate + H(+). It catalyses the reaction a 2'-deoxyribonucleoside 5'-triphosphate + H2O = a 2'-deoxyribonucleoside 5'-phosphate + diphosphate + H(+). Nucleoside triphosphate pyrophosphatase. May have a dual role in cell division arrest and in preventing the incorporation of modified nucleotides into cellular nucleic acids. The chain is Nucleoside triphosphate pyrophosphatase from Synechococcus sp. (strain CC9605).